Reading from the N-terminus, the 300-residue chain is Protoheme IX farnesyltransferase (300 aa).

Helical transmembrane passes span 24 to 44, 48 to 68, 94 to 114, 118 to 138, 146 to 166, 172 to 192, 217 to 237, 239 to 259, and 278 to 298; these read VTQLAVFCAVIGMFLATPGMV, VLLGGTIGIGLLAGSAFAINC, LQILAFSTVLGGLGAWTLYTF, LTIWLTIATFVGYAVIYTLLL, IVIGGASGAMPPALGWAAVTG, AWILVLIIFVWTPPHFWVLAL, LHILLYTVILFAVTMMPFISG, SGAVYLTSAVLLGALFLAYAW, and IVYLSLLFAALLVDHYARPVI.

This sequence belongs to the UbiA prenyltransferase family. Protoheme IX farnesyltransferase subfamily.

Its subcellular location is the cell inner membrane. It carries out the reaction heme b + (2E,6E)-farnesyl diphosphate + H2O = Fe(II)-heme o + diphosphate. It participates in porphyrin-containing compound metabolism; heme O biosynthesis; heme O from protoheme: step 1/1. Converts heme B (protoheme IX) to heme O by substitution of the vinyl group on carbon 2 of heme B porphyrin ring with a hydroxyethyl farnesyl side group. This is Protoheme IX farnesyltransferase from Burkholderia mallei (strain NCTC 10247).